A 412-amino-acid chain; its full sequence is Arginine biosynthesis bifunctional protein ArgJ (412 aa).

Positions 155, 181, 192, 279, 407, and 412 each coordinate substrate. The active-site Nucleophile is the T192.

It belongs to the ArgJ family. As to quaternary structure, heterotetramer of two alpha and two beta chains.

Its subcellular location is the cytoplasm. It carries out the reaction N(2)-acetyl-L-ornithine + L-glutamate = N-acetyl-L-glutamate + L-ornithine. It catalyses the reaction L-glutamate + acetyl-CoA = N-acetyl-L-glutamate + CoA + H(+). It functions in the pathway amino-acid biosynthesis; L-arginine biosynthesis; L-ornithine and N-acetyl-L-glutamate from L-glutamate and N(2)-acetyl-L-ornithine (cyclic): step 1/1. Its pathway is amino-acid biosynthesis; L-arginine biosynthesis; N(2)-acetyl-L-ornithine from L-glutamate: step 1/4. Its function is as follows. Catalyzes two activities which are involved in the cyclic version of arginine biosynthesis: the synthesis of N-acetylglutamate from glutamate and acetyl-CoA as the acetyl donor, and of ornithine by transacetylation between N(2)-acetylornithine and glutamate. This chain is Arginine biosynthesis bifunctional protein ArgJ, found in Aromatoleum aromaticum (strain DSM 19018 / LMG 30748 / EbN1) (Azoarcus sp. (strain EbN1)).